The following is a 346-amino-acid chain: N-acetyl-gamma-glutamyl-phosphate reductase (346 aa).

C150 is an active-site residue.

Belongs to the NAGSA dehydrogenase family. Type 1 subfamily.

The protein resides in the cytoplasm. It catalyses the reaction N-acetyl-L-glutamate 5-semialdehyde + phosphate + NADP(+) = N-acetyl-L-glutamyl 5-phosphate + NADPH + H(+). It participates in amino-acid biosynthesis; L-arginine biosynthesis; N(2)-acetyl-L-ornithine from L-glutamate: step 3/4. In terms of biological role, catalyzes the NADPH-dependent reduction of N-acetyl-5-glutamyl phosphate to yield N-acetyl-L-glutamate 5-semialdehyde. This chain is N-acetyl-gamma-glutamyl-phosphate reductase, found in Brevibacillus brevis (strain 47 / JCM 6285 / NBRC 100599).